The primary structure comprises 455 residues: Bifunctional protein GlmU (455 aa).

Residues 1-227 (MGLSVIILAA…CEEVQGVNDR (227 aa)) are pyrophosphorylase. Residues 8 to 11 (LAAG), lysine 22, glutamine 73, 78 to 79 (GT), 100 to 102 (YGD), glycine 137, glutamate 152, asparagine 167, and asparagine 225 each bind UDP-N-acetyl-alpha-D-glucosamine. Aspartate 102 lines the Mg(2+) pocket. Mg(2+) is bound at residue asparagine 225. Positions 228–248 (WELTKLERYYQRLMAKKLSLA) are linker. Residues 249-455 (GVTIIDPERF…KGWHRPTKKE (207 aa)) are N-acetyltransferase. Positions 332 and 350 each coordinate UDP-N-acetyl-alpha-D-glucosamine. The Proton acceptor role is filled by histidine 362. The UDP-N-acetyl-alpha-D-glucosamine site is built by tyrosine 365 and asparagine 376. Acetyl-CoA is bound by residues alanine 379, 385–386 (NY), serine 404, alanine 422, and arginine 439.

In the N-terminal section; belongs to the N-acetylglucosamine-1-phosphate uridyltransferase family. This sequence in the C-terminal section; belongs to the transferase hexapeptide repeat family. As to quaternary structure, homotrimer. It depends on Mg(2+) as a cofactor.

Its subcellular location is the cytoplasm. The catalysed reaction is alpha-D-glucosamine 1-phosphate + acetyl-CoA = N-acetyl-alpha-D-glucosamine 1-phosphate + CoA + H(+). The enzyme catalyses N-acetyl-alpha-D-glucosamine 1-phosphate + UTP + H(+) = UDP-N-acetyl-alpha-D-glucosamine + diphosphate. The protein operates within nucleotide-sugar biosynthesis; UDP-N-acetyl-alpha-D-glucosamine biosynthesis; N-acetyl-alpha-D-glucosamine 1-phosphate from alpha-D-glucosamine 6-phosphate (route II): step 2/2. Its pathway is nucleotide-sugar biosynthesis; UDP-N-acetyl-alpha-D-glucosamine biosynthesis; UDP-N-acetyl-alpha-D-glucosamine from N-acetyl-alpha-D-glucosamine 1-phosphate: step 1/1. It functions in the pathway bacterial outer membrane biogenesis; LPS lipid A biosynthesis. In terms of biological role, catalyzes the last two sequential reactions in the de novo biosynthetic pathway for UDP-N-acetylglucosamine (UDP-GlcNAc). The C-terminal domain catalyzes the transfer of acetyl group from acetyl coenzyme A to glucosamine-1-phosphate (GlcN-1-P) to produce N-acetylglucosamine-1-phosphate (GlcNAc-1-P), which is converted into UDP-GlcNAc by the transfer of uridine 5-monophosphate (from uridine 5-triphosphate), a reaction catalyzed by the N-terminal domain. The chain is Bifunctional protein GlmU from Coxiella burnetii (strain RSA 493 / Nine Mile phase I).